A 308-amino-acid polypeptide reads, in one-letter code: Protease HtpX homolog (308 aa).

A run of 2 helical transmembrane segments spans residues 16–36 and 39–59; these read LLSL…IYAV and YLFG…VLMM. A Zn(2+)-binding site is contributed by His149. Residue Glu150 is part of the active site. Residue His153 coordinates Zn(2+). Helical transmembrane passes span 161 to 181 and 192 to 212; these read VIMA…TTLF and IILA…VLSV. Residue Glu217 coordinates Zn(2+).

Belongs to the peptidase M48B family. Zn(2+) serves as cofactor.

It localises to the cell membrane. The protein is Protease HtpX homolog of Thermoplasma volcanium (strain ATCC 51530 / DSM 4299 / JCM 9571 / NBRC 15438 / GSS1).